We begin with the raw amino-acid sequence, 366 residues long: Spermidine/putrescine import ATP-binding protein PotA (366 aa).

Residues Ile-14–Ile-247 form the ABC transporter domain. Gly-49–Thr-56 serves as a coordination point for ATP.

This sequence belongs to the ABC transporter superfamily. Spermidine/putrescine importer (TC 3.A.1.11.1) family. In terms of assembly, the complex is composed of two ATP-binding proteins (PotA), two transmembrane proteins (PotB and PotC) and a solute-binding protein (PotD).

The protein localises to the cell inner membrane. The catalysed reaction is ATP + H2O + polyamine-[polyamine-binding protein]Side 1 = ADP + phosphate + polyamineSide 2 + [polyamine-binding protein]Side 1.. Part of the ABC transporter complex PotABCD involved in spermidine/putrescine import. Responsible for energy coupling to the transport system. This Ruegeria pomeroyi (strain ATCC 700808 / DSM 15171 / DSS-3) (Silicibacter pomeroyi) protein is Spermidine/putrescine import ATP-binding protein PotA.